Consider the following 449-residue polypeptide: Asparagine--tRNA ligase (449 aa).

The protein belongs to the class-II aminoacyl-tRNA synthetase family. In terms of assembly, homodimer.

Its subcellular location is the cytoplasm. The catalysed reaction is tRNA(Asn) + L-asparagine + ATP = L-asparaginyl-tRNA(Asn) + AMP + diphosphate + H(+). This Mesomycoplasma hyopneumoniae (strain J / ATCC 25934 / NCTC 10110) (Mycoplasma hyopneumoniae) protein is Asparagine--tRNA ligase.